A 114-amino-acid chain; its full sequence is Non-specific lipid-transfer protein 2 (114 aa).

Positions 1–23 are cleaved as a signal peptide; sequence MEMVNKIACFVLLCMVVVAPHAE. Intrachain disulfides connect Cys-27/Cys-73, Cys-37/Cys-50, Cys-51/Cys-96, and Cys-71/Cys-110.

It belongs to the plant LTP family.

Functionally, plant non-specific lipid-transfer proteins transfer phospholipids as well as galactolipids across membranes. May play a role in wax or cutin deposition in the cell walls of expanding epidermal cells and certain secretory tissues. In Solanum pennellii (Tomato), this protein is Non-specific lipid-transfer protein 2 (LTP2).